Here is a 163-residue protein sequence, read N- to C-terminus: Crossover junction endodeoxyribonuclease RuvC (163 aa).

Residues aspartate 7, glutamate 66, and aspartate 139 contribute to the active site. Mg(2+)-binding residues include aspartate 7, glutamate 66, and aspartate 139.

Belongs to the RuvC family. In terms of assembly, homodimer which binds Holliday junction (HJ) DNA. The HJ becomes 2-fold symmetrical on binding to RuvC with unstacked arms; it has a different conformation from HJ DNA in complex with RuvA. In the full resolvosome a probable DNA-RuvA(4)-RuvB(12)-RuvC(2) complex forms which resolves the HJ. Mg(2+) serves as cofactor.

It localises to the cytoplasm. The enzyme catalyses Endonucleolytic cleavage at a junction such as a reciprocal single-stranded crossover between two homologous DNA duplexes (Holliday junction).. Its function is as follows. The RuvA-RuvB-RuvC complex processes Holliday junction (HJ) DNA during genetic recombination and DNA repair. Endonuclease that resolves HJ intermediates. Cleaves cruciform DNA by making single-stranded nicks across the HJ at symmetrical positions within the homologous arms, yielding a 5'-phosphate and a 3'-hydroxyl group; requires a central core of homology in the junction. The consensus cleavage sequence is 5'-(A/T)TT(C/G)-3'. Cleavage occurs on the 3'-side of the TT dinucleotide at the point of strand exchange. HJ branch migration catalyzed by RuvA-RuvB allows RuvC to scan DNA until it finds its consensus sequence, where it cleaves and resolves the cruciform DNA. The protein is Crossover junction endodeoxyribonuclease RuvC of Thermomicrobium roseum (strain ATCC 27502 / DSM 5159 / P-2).